A 458-amino-acid chain; its full sequence is tRNA modification GTPase MnmE (458 aa).

The (6S)-5-formyl-5,6,7,8-tetrahydrofolate site is built by arginine 26, glutamate 88, and arginine 127. Positions 224–378 (GLSTAIIGRP…IEDRINQLFF (155 aa)) constitute a TrmE-type G domain. Asparagine 234 is a K(+) binding site. GTP contacts are provided by residues 234–239 (NVGKSS), 253–259 (TDIAGTT), and 278–281 (DTAG). Mg(2+) is bound at residue serine 238. Residues threonine 253, isoleucine 255, and threonine 258 each coordinate K(+). Threonine 259 provides a ligand contact to Mg(2+). Lysine 458 provides a ligand contact to (6S)-5-formyl-5,6,7,8-tetrahydrofolate.

It belongs to the TRAFAC class TrmE-Era-EngA-EngB-Septin-like GTPase superfamily. TrmE GTPase family. In terms of assembly, homodimer. Heterotetramer of two MnmE and two MnmG subunits. It depends on K(+) as a cofactor.

The protein localises to the cytoplasm. In terms of biological role, exhibits a very high intrinsic GTPase hydrolysis rate. Involved in the addition of a carboxymethylaminomethyl (cmnm) group at the wobble position (U34) of certain tRNAs, forming tRNA-cmnm(5)s(2)U34. This chain is tRNA modification GTPase MnmE, found in Streptococcus pyogenes serotype M3 (strain ATCC BAA-595 / MGAS315).